A 694-amino-acid chain; its full sequence is Elongation factor G (694 aa).

The tr-type G domain occupies Lys6–Thr288. GTP-binding positions include Ala15–Thr22, Asp86–His90, and Asn140–Asp143.

The protein belongs to the TRAFAC class translation factor GTPase superfamily. Classic translation factor GTPase family. EF-G/EF-2 subfamily.

The protein resides in the cytoplasm. Functionally, catalyzes the GTP-dependent ribosomal translocation step during translation elongation. During this step, the ribosome changes from the pre-translocational (PRE) to the post-translocational (POST) state as the newly formed A-site-bound peptidyl-tRNA and P-site-bound deacylated tRNA move to the P and E sites, respectively. Catalyzes the coordinated movement of the two tRNA molecules, the mRNA and conformational changes in the ribosome. The chain is Elongation factor G from Legionella pneumophila (strain Paris).